We begin with the raw amino-acid sequence, 726 residues long: Beta-adducin (726 aa).

Positions 1–25 are disordered; it reads MSEETVPEAASPPPPQGQPYFDRFS. Residues Ser11 and Ser25 each carry the phosphoserine modification. Thr55 carries the post-translational modification Phosphothreonine; by PKA. Residues Ser60 and Ser344 each carry the phosphoserine modification. The interval 425–444 is interaction with calmodulin; that stretch reads KQQKEKTRWLNTPNTYLRVN. The tract at residues 525–726 is disordered; sequence AEKSRSPSTE…KSKKKEKVES (202 aa). Phosphoserine occurs at positions 530 and 532. Thr533 is modified (phosphothreonine). A Phosphoserine modification is found at Ser535. Positions 566 to 586 are enriched in basic and acidic residues; sequence EEYKKEVERKKLELDGEKETA. Over residues 588-606 the composition is skewed to low complexity; it reads EEPGSPAKSAPASPVQSPA. 4 positions are modified to phosphoserine: Ser592, Ser596, Ser600, and Ser604. Phosphothreonine is present on Thr611. Residues Ser613, Ser617, Ser619, and Ser621 each carry the phosphoserine modification. Residues 621–631 are compositionally biased toward basic and acidic residues; it reads SLEEGTKKTET. A compositionally biased stretch (low complexity) spans 632–645; that stretch reads SKAATTEPETTQPE. Residues 665–674 show a composition bias toward polar residues; sequence GLSQMTTSAD. A Phosphothreonine modification is found at Thr675. Phosphoserine is present on residues Ser686, Ser689, Ser693, Ser697, Ser699, and Ser701. Residues 689–701 show a composition bias toward low complexity; it reads SGPMSPEGSPSKS. Basic residues predominate over residues 702–726; it reads PSKKKKKFRTPSFLKKSKKKEKVES. Ser703 carries the post-translational modification Phosphoserine; by PKC. Residues 704 to 721 form an interaction with calmodulin region; it reads KKKKKFRTPSFLKKSKKK. Residue Ser713 is modified to Phosphoserine; by PKA and PKC.

This sequence belongs to the aldolase class II family. Adducin subfamily. In terms of assembly, heterodimer of an alpha and a beta subunit. Found in a complex with ADD2, DMTN and SLC2A1. Interacts with SLC2A1. The N-terminus is blocked. In terms of tissue distribution, expressed mainly in brain, spleen, kidney cortex and medulla, and heart. Also expressed in human umbilical vein endothelial cells, human vascular smooth muscle cells, kidney tubular cells and K-562 cell line.

The protein resides in the cytoplasm. It localises to the cytoskeleton. It is found in the cell membrane. Its function is as follows. Membrane-cytoskeleton-associated protein that promotes the assembly of the spectrin-actin network. Binds to the erythrocyte membrane receptor SLC2A1/GLUT1 and may therefore provide a link between the spectrin cytoskeleton to the plasma membrane. Binds to calmodulin. Calmodulin binds preferentially to the beta subunit. In Homo sapiens (Human), this protein is Beta-adducin (ADD2).